The sequence spans 196 residues: dITP/XTP pyrophosphatase (196 aa).

10-15 (TTNPHK) is a substrate binding site. D68 (proton acceptor) is an active-site residue. D68 contacts Mg(2+). Residues S69, 148-151 (FGYD), and 175-176 (HR) each bind substrate.

The protein belongs to the HAM1 NTPase family. Homodimer. Requires Mg(2+) as cofactor.

It catalyses the reaction XTP + H2O = XMP + diphosphate + H(+). It carries out the reaction dITP + H2O = dIMP + diphosphate + H(+). The catalysed reaction is ITP + H2O = IMP + diphosphate + H(+). Functionally, pyrophosphatase that catalyzes the hydrolysis of nucleoside triphosphates to their monophosphate derivatives, with a high preference for the non-canonical purine nucleotides XTP (xanthosine triphosphate), dITP (deoxyinosine triphosphate) and ITP. Seems to function as a house-cleaning enzyme that removes non-canonical purine nucleotides from the nucleotide pool, thus preventing their incorporation into DNA/RNA and avoiding chromosomal lesions. This chain is dITP/XTP pyrophosphatase, found in Thermotoga maritima (strain ATCC 43589 / DSM 3109 / JCM 10099 / NBRC 100826 / MSB8).